The primary structure comprises 91 residues: DNA-directed RNA polymerase subunit omega (91 aa).

This sequence belongs to the RNA polymerase subunit omega family. In terms of assembly, the RNAP catalytic core consists of 2 alpha, 1 beta, 1 beta' and 1 omega subunit. When a sigma factor is associated with the core the holoenzyme is formed, which can initiate transcription.

The enzyme catalyses RNA(n) + a ribonucleoside 5'-triphosphate = RNA(n+1) + diphosphate. Functionally, promotes RNA polymerase assembly. Latches the N- and C-terminal regions of the beta' subunit thereby facilitating its interaction with the beta and alpha subunits. In Syntrophus aciditrophicus (strain SB), this protein is DNA-directed RNA polymerase subunit omega.